Reading from the N-terminus, the 143-residue chain is Transcriptional regulator SlyA (143 aa).

In terms of domain architecture, HTH marR-type spans 2 to 135 (ESTLGSDLAR…LSGLIDKLER (134 aa)). Residues 49-72 (QIQLAKAIGIEQPSLVRTLDQLEE) constitute a DNA-binding region (H-T-H motif).

Belongs to the SlyA family. As to quaternary structure, homodimer.

Transcription regulator that can specifically activate or repress expression of target genes. The protein is Transcriptional regulator SlyA of Yersinia enterocolitica serotype O:8 / biotype 1B (strain NCTC 13174 / 8081).